The chain runs to 638 residues: Plasma kallikrein (638 aa).

The first 19 residues, 1–19, serve as a signal peptide directing secretion; it reads MILFKQVGYFVSLFATVSC. Apple domains lie at 21-104, 111-194, 201-284, and 292-375; these read CLSQ…LKQC, CHQD…LKSC, CPMD…LFTC, and CHFK…LRLC. 18 disulfide bridges follow: Cys-21–Cys-104, Cys-47–Cys-77, Cys-51–Cys-57, Cys-111–Cys-194, Cys-137–Cys-166, Cys-141–Cys-147, Cys-201–Cys-284, Cys-227–Cys-256, Cys-231–Cys-237, Cys-292–Cys-375, Cys-318–Cys-347, Cys-322–Cys-328, Cys-340–Cys-345, Cys-383–Cys-503, Cys-419–Cys-435, Cys-517–Cys-584, Cys-548–Cys-563, and Cys-574–Cys-602. The N-linked (GlcNAc...) asparagine glycan is linked to Asn-127. Asn-215 carries N-linked (GlcNAc...) asparagine glycosylation. Asn-308 carries an N-linked (GlcNAc...) asparagine glycan. A Peptidase S1 domain is found at 391–626; the sequence is IVGGTNSSLG…YIDWILEKIQ (236 aa). Asn-396 carries an N-linked (GlcNAc...) asparagine glycan. The active-site Charge relay system is the His-434. N-linked (GlcNAc...) asparagine glycosylation is present at Asn-453. Asp-483 (charge relay system) is an active-site residue. Asn-494 is a glycosylation site (N-linked (GlcNAc...) asparagine). Residue Ser-578 is the Charge relay system of the active site.

The protein belongs to the peptidase S1 family. Plasma kallikrein subfamily. As to quaternary structure, forms a heterodimer with SERPINA5. The zymogen is activated by factor XIIa, which cleaves the molecule into a light chain, which contains the active site, and a heavy chain, which associates with HMW kininogen. These chains are linked by one or more disulfide bonds.

It localises to the secreted. It carries out the reaction Cleaves selectively Arg-|-Xaa and Lys-|-Xaa bonds, including Lys-|-Arg and Arg-|-Ser bonds in (human) kininogen to release bradykinin.. Its activity is regulated as follows. Inhibited by SERPINA5. Functionally, the enzyme cleaves Lys-Arg and Arg-Ser bonds. It activates, in a reciprocal reaction, factor XII after its binding to a negatively charged surface. It also releases bradykinin from HMW kininogen and may also play a role in the renin-angiotensin system by converting prorenin into renin. The polypeptide is Plasma kallikrein (Klkb1) (Rattus norvegicus (Rat)).